The sequence spans 406 residues: Bifunctional enzyme IspD/IspF (406 aa).

Residues 1–247 (MSLIRVNGEA…ALFFNPAKDT (247 aa)) are 2-C-methyl-D-erythritol 4-phosphate cytidylyltransferase. Residues 248 to 406 (FIGMGFDTHA…HVSMRYKQKL (159 aa)) form a 2-C-methyl-D-erythritol 2,4-cyclodiphosphate synthase region. A divalent metal cation is bound by residues Asp-254 and His-256. Residues 254-256 (DTH) and 280-281 (HS) each bind 4-CDP-2-C-methyl-D-erythritol 2-phosphate. His-288 is an a divalent metal cation binding site. Residues 302 to 304 (DIG), 307 to 311 (FPDND), 378 to 381 (TTME), Phe-385, and Lys-388 each bind 4-CDP-2-C-methyl-D-erythritol 2-phosphate.

This sequence in the N-terminal section; belongs to the IspD/TarI cytidylyltransferase family. IspD subfamily. In the C-terminal section; belongs to the IspF family. The cofactor is a divalent metal cation.

It carries out the reaction 2-C-methyl-D-erythritol 4-phosphate + CTP + H(+) = 4-CDP-2-C-methyl-D-erythritol + diphosphate. The catalysed reaction is 4-CDP-2-C-methyl-D-erythritol 2-phosphate = 2-C-methyl-D-erythritol 2,4-cyclic diphosphate + CMP. Its pathway is isoprenoid biosynthesis; isopentenyl diphosphate biosynthesis via DXP pathway; isopentenyl diphosphate from 1-deoxy-D-xylulose 5-phosphate: step 2/6. The protein operates within isoprenoid biosynthesis; isopentenyl diphosphate biosynthesis via DXP pathway; isopentenyl diphosphate from 1-deoxy-D-xylulose 5-phosphate: step 4/6. In terms of biological role, bifunctional enzyme that catalyzes the formation of 4-diphosphocytidyl-2-C-methyl-D-erythritol from CTP and 2-C-methyl-D-erythritol 4-phosphate (MEP) (IspD), and catalyzes the conversion of 4-diphosphocytidyl-2-C-methyl-D-erythritol 2-phosphate (CDP-ME2P) to 2-C-methyl-D-erythritol 2,4-cyclodiphosphate (ME-CPP) with a corresponding release of cytidine 5-monophosphate (CMP) (IspF). The sequence is that of Bifunctional enzyme IspD/IspF from Helicobacter pylori (strain Shi470).